Consider the following 639-residue polypeptide: MKIINIGVLAHVDAGKTTLTESLLYNSGAITELGSVDKGTTRTDNTLLERQRGITIQTGITSFQWENTKVNIIDTPGHMDFLAEVYRSLSVLDGAILLISAKDGVQAQTRILFHALRKMGIPTIFFINKIDQNGIDLSTVYQDIKEKLSAEIVIKQKVELYPNMCVTNFTESEQWDTVIEGNDDLLEKYMSGKSLEALELEQEESIRFHNCSLFPVYHGSAKNNIGIDNLIEVITNKFYSSTHRGQSELCGKVFKIEYSEKRQRLAYIRLYSGVLHLRDSVRISEKEKIKITEMYTSINGELCKIDKAYSGEIVILQNEFLKLNSVLGDTKLLPQRERIENPLPLLQTTVEPSKPQQREMLLDALLEISDSDPLLRYYVDSATHEIILSFLGKVQMEVTCALLQEKYHVEIEIKEPTVIYMERPLKKAEYTIHIEVPPNPFWASIGLSVSPLPLGSGMQYESSVSLGYLNQSFQNAVMEGIRYGCEQGLYGWNVTDCKICFKYGLYYSPVSTPADFRMLAPIVLEQVLKKAGTELLEPYLSFKIYAPQEYLSRAYTDAPKYCANIVDTQLKNNEVILSGEIPARCIQEYRSDLTFFTNGRSVCLTELKGYHVTTGEPVCQPRRPNSRIDKVRYMFNKIT.

A tr-type G domain is found at 1-242 (MKIINIGVLA…VITNKFYSST (242 aa)). GTP-binding positions include 10–17 (AHVDAGKT), 74–78 (DTPGH), and 128–131 (NKID).

It belongs to the TRAFAC class translation factor GTPase superfamily. Classic translation factor GTPase family. TetM/TetO subfamily.

Its function is as follows. Abolishes the inhibitory effect of tetracyclin on protein synthesis by a non-covalent modification of the ribosomes. The chain is Tetracycline resistance protein TetM from transposon Tn5251 (tetM(5251)) from Streptococcus pneumoniae.